The sequence spans 285 residues: Small ribosomal subunit protein uS2 (285 aa).

The tract at residues 262–285 (NDDWNEDDTAPAAPGAASWGGAAF) is disordered. Residues 271 to 285 (APAAPGAASWGGAAF) are compositionally biased toward low complexity.

It belongs to the universal ribosomal protein uS2 family. As to quaternary structure, component of the small ribosomal subunit. Mature ribosomes consist of a small (40S) and a large (60S) subunit. The 40S subunit contains about 33 different proteins and 1 molecule of RNA (18S). The 60S subunit contains about 49 different proteins and 3 molecules of RNA (28S, 5.8S and 5S). Interacts with ribosomal protein S21.

Its subcellular location is the cytoplasm. Required for the assembly and/or stability of the 40S ribosomal subunit. Required for the processing of the 20S rRNA-precursor to mature 18S rRNA in a late step of the maturation of 40S ribosomal subunits. This is Small ribosomal subunit protein uS2 from Anopheles gambiae (African malaria mosquito).